Reading from the N-terminus, the 125-residue chain is Small ribosomal subunit protein uS12 (125 aa).

Positions 1-27 are disordered; sequence MPTINQLVRKGREKGEQKSTAPALKSC. D89 is modified (3-methylthioaspartic acid). The tract at residues 103 to 125 is disordered; sequence DASGVQKRNQGRSKYGTKRPKKK. Positions 111 to 125 are enriched in basic residues; that stretch reads NQGRSKYGTKRPKKK.

Belongs to the universal ribosomal protein uS12 family. In terms of assembly, part of the 30S ribosomal subunit. Contacts proteins S8 and S17. May interact with IF1 in the 30S initiation complex.

Functionally, with S4 and S5 plays an important role in translational accuracy. In terms of biological role, interacts with and stabilizes bases of the 16S rRNA that are involved in tRNA selection in the A site and with the mRNA backbone. Located at the interface of the 30S and 50S subunits, it traverses the body of the 30S subunit contacting proteins on the other side and probably holding the rRNA structure together. The combined cluster of proteins S8, S12 and S17 appears to hold together the shoulder and platform of the 30S subunit. This is Small ribosomal subunit protein uS12 from Syntrophomonas wolfei subsp. wolfei (strain DSM 2245B / Goettingen).